An 847-amino-acid polypeptide reads, in one-letter code: Beta-hexosaminidase (847 aa).

3 disulfide bridges follow: Cys-31–Cys-40, Cys-377–Cys-385, and Cys-484–Cys-530. Catalysis depends on Glu-519, which acts as the Proton donor.

Belongs to the glycosyl hydrolase 20 family.

The catalysed reaction is Hydrolysis of terminal non-reducing N-acetyl-D-hexosamine residues in N-acetyl-beta-D-hexosaminides.. The protein operates within glycan degradation; chitin degradation. Hydrolysis of terminal, non-reducing N-acetyl-beta-D-glucosamine residues in chitobiose and higher analogs, and in glycoproteins. This Vibrio vulnificus protein is Beta-hexosaminidase (hex).